A 357-amino-acid chain; its full sequence is DNA primase small subunit PriS (357 aa).

Catalysis depends on residues Asp105, Asp107, and Asp259.

The protein belongs to the eukaryotic-type primase small subunit family. Heterodimer of a small subunit (PriS) and a large subunit (PriL). Requires Mg(2+) as cofactor. Mn(2+) is required as a cofactor.

Catalytic subunit of DNA primase, an RNA polymerase that catalyzes the synthesis of short RNA molecules used as primers for DNA polymerase during DNA replication. The small subunit contains the primase catalytic core and has DNA synthesis activity on its own. Binding to the large subunit stabilizes and modulates the activity, increasing the rate of DNA synthesis while decreasing the length of the DNA fragments, and conferring RNA synthesis capability. The DNA polymerase activity may enable DNA primase to also catalyze primer extension after primer synthesis. May also play a role in DNA repair. The sequence is that of DNA primase small subunit PriS from Methanococcus maripaludis (strain C6 / ATCC BAA-1332).